Here is a 376-residue protein sequence, read N- to C-terminus: 1-deoxy-D-xylulose 5-phosphate reductoisomerase (376 aa).

NADPH-binding residues include threonine 12, glycine 13, serine 14, isoleucine 15, asparagine 39, and asparagine 116. Lysine 117 contacts 1-deoxy-D-xylulose 5-phosphate. Glutamate 118 lines the NADPH pocket. Aspartate 142 is a binding site for Mn(2+). 4 residues coordinate 1-deoxy-D-xylulose 5-phosphate: serine 143, glutamate 144, serine 164, and histidine 187. Residue glutamate 144 coordinates Mn(2+). Residue glycine 193 participates in NADPH binding. The 1-deoxy-D-xylulose 5-phosphate site is built by serine 200, asparagine 205, lysine 206, and glutamate 209. Glutamate 209 lines the Mn(2+) pocket.

Belongs to the DXR family. Requires Mg(2+) as cofactor. Mn(2+) serves as cofactor.

The enzyme catalyses 2-C-methyl-D-erythritol 4-phosphate + NADP(+) = 1-deoxy-D-xylulose 5-phosphate + NADPH + H(+). It participates in isoprenoid biosynthesis; isopentenyl diphosphate biosynthesis via DXP pathway; isopentenyl diphosphate from 1-deoxy-D-xylulose 5-phosphate: step 1/6. In terms of biological role, catalyzes the NADPH-dependent rearrangement and reduction of 1-deoxy-D-xylulose-5-phosphate (DXP) to 2-C-methyl-D-erythritol 4-phosphate (MEP). The sequence is that of 1-deoxy-D-xylulose 5-phosphate reductoisomerase from Thermotoga maritima (strain ATCC 43589 / DSM 3109 / JCM 10099 / NBRC 100826 / MSB8).